The chain runs to 118 residues: T cell receptor gamma variable 3 (118 aa).

An N-terminal signal peptide occupies residues 1–17 (MRWALLVLLAFLSPASQ). Positions 18–118 (KSSNLEGRTK…GVYYCATWDR (101 aa)) constitute an Ig-like domain. Residues cysteine 41 and cysteine 113 are joined by a disulfide bond. N-linked (GlcNAc...) asparagine glycosylation occurs at asparagine 106.

As to quaternary structure, gamma-delta TR is a heterodimer composed of a gamma and delta chain; disulfide-linked. The gamma-delta TR is associated with the transmembrane signaling CD3 coreceptor proteins following the stoichiometry: a single gamma-delta TR heterodimer associates with one CD3D-CD3E heterodimer, one CD3G-CD3E heterodimer and one CD247 homodimer forming a stable octameric structure. Upon activation, gamma-delta TR complex associates with FCER1G to initiate intracellular signaling.

The protein resides in the cell membrane. In terms of biological role, v region of the variable domain of T cell receptor (TR) gamma chain that participates in the antigen recognition. Gamma-delta TRs recognize a variety of self and foreign non-peptide antigens frequently expressed at the epithelial boundaries between the host and external environment, including endogenous lipids presented by MH-like protein CD1D and phosphoantigens presented by butyrophilin-like molecule BTN3A1. Upon antigen recognition induces rapid, innate-like immune responses involved in pathogen clearance and tissue repair. Binding of gamma-delta TR complex to antigen triggers phosphorylation of immunoreceptor tyrosine-based activation motifs (ITAMs) in the CD3 chains by the LCK and FYN kinases, allowing the recruitment, phosphorylation, and activation of ZAP70 that facilitates phosphorylation of the scaffolding proteins LCP2 and LAT. This lead to the formation of a supramolecular signalosome that recruits the phospholipase PLCG1, resulting in calcium mobilization and ERK activation, ultimately leading to T cell expansion and differentiation into effector cells. Gamma-delta TRs are produced through somatic rearrangement of a limited repertoire of variable (V), diversity (D), and joining (J) genes. The potential diversity of gamma-delta TRs is conferred by the unique ability to rearrange (D) genes in tandem and to utilize all three reading frames. The combinatorial diversity is considerably increased by the sequence exonuclease trimming and random nucleotide (N) region additions which occur during the V-(D)-J rearrangements. The protein is T cell receptor gamma variable 3 of Homo sapiens (Human).